The primary structure comprises 440 residues: Thymidine phosphorylase (440 aa).

The protein belongs to the thymidine/pyrimidine-nucleoside phosphorylase family. As to quaternary structure, homodimer.

It carries out the reaction thymidine + phosphate = 2-deoxy-alpha-D-ribose 1-phosphate + thymine. Its pathway is pyrimidine metabolism; dTMP biosynthesis via salvage pathway; dTMP from thymine: step 1/2. The enzymes which catalyze the reversible phosphorolysis of pyrimidine nucleosides are involved in the degradation of these compounds and in their utilization as carbon and energy sources, or in the rescue of pyrimidine bases for nucleotide synthesis. The polypeptide is Thymidine phosphorylase (Escherichia coli O139:H28 (strain E24377A / ETEC)).